Here is a 2145-residue protein sequence, read N- to C-terminus: U5 small nuclear ribonucleoprotein 200 kDa helicase (2145 aa).

2 disordered regions span residues 54–82 (GDRAIKGKAPVQDQKKKRKKKDDEKAQQF) and 202–243 (DSDE…GDGH). Residues 220 to 231 (SEEESEEEEGVD) show a composition bias toward acidic residues. The region spanning 484–667 (DSALRSKEHL…FLRVKPEHLH (184 aa)) is the Helicase ATP-binding 1 domain. 497-504 (APTGAGKT) contributes to the ATP binding site. Positions 609-612 (DEIH) match the DEAH box motif. The 218-residue stretch at 677-894 (PLEQQYIGVT…QMVSRLTDML (218 aa)) folds into the Helicase C-terminal domain. The region spanning 975–1278 (TELGRIASHF…IGAETVLPIS (304 aa)) is the SEC63 1 domain. Residues 1331–1506 (RTVFESNENV…WLGCSASATF (176 aa)) enclose the Helicase ATP-binding 2 domain. Residue 1344–1351 (APNGSGKT) participates in ATP binding. The DEAH box signature appears at 1448–1451 (DDLH). The SEC63 2 domain maps to 1812 to 2124 (LNLGMIASYY…YLGADQEFDV (313 aa)).

Belongs to the helicase family. SKI2 subfamily.

The protein resides in the nucleus. It catalyses the reaction ATP + H2O = ADP + phosphate + H(+). Catalyzes the ATP-dependent unwinding of U4/U6 RNA duplices, an essential step in the assembly of a catalytically active spliceosome. Plays a role in pre-mRNA splicing. This chain is U5 small nuclear ribonucleoprotein 200 kDa helicase, found in Caenorhabditis elegans.